A 91-amino-acid polypeptide reads, in one-letter code: Non-specific lipid-transfer protein 1 (91 aa).

Cystine bridges form between Cys3–Cys50, Cys13–Cys27, Cys28–Cys73, and Cys48–Cys87.

It belongs to the plant LTP family.

Functionally, plant non-specific lipid-transfer proteins transfer phospholipids as well as galactolipids across membranes. May play a role in wax or cutin deposition in the cell walls of expanding epidermal cells and certain secretory tissues. The protein is Non-specific lipid-transfer protein 1 of Prunus persica (Peach).